A 293-amino-acid polypeptide reads, in one-letter code: Ribosomal protein L11 methyltransferase (293 aa).

The S-adenosyl-L-methionine site is built by T145, G166, D188, and N229.

It belongs to the methyltransferase superfamily. PrmA family.

Its subcellular location is the cytoplasm. The enzyme catalyses L-lysyl-[protein] + 3 S-adenosyl-L-methionine = N(6),N(6),N(6)-trimethyl-L-lysyl-[protein] + 3 S-adenosyl-L-homocysteine + 3 H(+). Its function is as follows. Methylates ribosomal protein L11. This Idiomarina loihiensis (strain ATCC BAA-735 / DSM 15497 / L2-TR) protein is Ribosomal protein L11 methyltransferase.